The following is a 448-amino-acid chain: MDKLDLVNDGLDIIDFIQKNQKEIQKTYGRSSIQQPSTKDRTRAWEDFLQSTSGEHEQAEGGMPKNDGGTEGRNVEDLSSVTSSDGTIGQRVSNTRAWAEDPDDIQLDPMVTDVVYHDHGGECTGHGPSSSPERGWSYHMSGTHDGNVRAVPDTKVLPNAPKTTVPEEVREIDLIGLEDKFASAGLNPAAVPFVPKNQSTPTEEPPVIPEYYYGSGRRGDLSKSPPRGNVNLDSIKIYTSDDEDENQLEYEDEFAKSSSEVVIDTTPEDNDSINQEEVVGDPSDQGLEHPFPLGKFPEKEETPDVRRKDSLMQDSCKRGGVPKRLPMLSEEFECSGSDDPIIQELEREGSHPGGSLRLREPPQSSGNSRNQPDRQLKTGDAASPGGVQRPGTPMPKSRIMPIKKGAQTRSLNMLGRKTCLGRRVVQPGMFADYPPTKKARVLLRRMSN.

2 disordered regions span residues 26-104 (KTYG…DPDD) and 193-406 (FVPK…KKGA). 2 stretches are compositionally biased toward polar residues: residues 28–37 (YGRSSIQQPS) and 77–96 (DLSS…SNTR). Acidic residues predominate over residues 240 to 252 (SDDEDENQLEYED). A Phosphoserine; by host modification is found at Ser-257. Basic and acidic residues predominate over residues 296–317 (FPEKEETPDVRRKDSLMQDSCK). Residue Ser-350 is modified to Phosphoserine; by host.

In Hendra virus (isolate Horse/Autralia/Hendra/1994), this protein is Protein W (P/V/C).